Reading from the N-terminus, the 213-residue chain is A-type ATP synthase subunit D (213 aa).

The protein belongs to the V-ATPase D subunit family. As to quaternary structure, has multiple subunits with at least A(3), B(3), C, D, E, F, H, I and proteolipid K(x).

It is found in the cell membrane. Its function is as follows. Component of the A-type ATP synthase that produces ATP from ADP in the presence of a proton gradient across the membrane. This chain is A-type ATP synthase subunit D, found in Saccharolobus solfataricus (strain ATCC 35092 / DSM 1617 / JCM 11322 / P2) (Sulfolobus solfataricus).